Here is a 238-residue protein sequence, read N- to C-terminus: Ankyrin repeat domain-containing protein 49 (238 aa).

Positions 38–57 are disordered; the sequence is TGTQSLWVGNSDEDEEQEEK. Phosphoserine is present on S48. Positions 48-57 are enriched in acidic residues; the sequence is SDEDEEQEEK. ANK repeat units lie at residues 72–105, 106–135, 139–168, and 172–205; these read DPSKLLLWAAEKNRLATVQRLLSEKAAEVNTRDE, DEYTPLHRAAYSGHIDVVRELVAKGADVHA, DGWTPLHSACKWNNTKVASFLLQHDADINA, and GLLTPLHLAAGNRDSRDTLELLLMNRYIKPELKN.

Expressed in spermatogonia, spermatocytes and round spermatids.

The protein localises to the nucleus. In terms of biological role, may have a role in spermatogenesis where it promotes autophagy in response to serum starvation, via the NF-kappaB pathway. The chain is Ankyrin repeat domain-containing protein 49 (Ankrd49) from Mus musculus (Mouse).